We begin with the raw amino-acid sequence, 713 residues long: Polyribonucleotide nucleotidyltransferase (713 aa).

2 residues coordinate Mg(2+): aspartate 487 and aspartate 493. In terms of domain architecture, KH spans proline 554–isoleucine 613. Positions glycine 623 to lysine 691 constitute an S1 motif domain.

The protein belongs to the polyribonucleotide nucleotidyltransferase family. Mg(2+) is required as a cofactor.

It localises to the cytoplasm. The enzyme catalyses RNA(n+1) + phosphate = RNA(n) + a ribonucleoside 5'-diphosphate. In terms of biological role, involved in mRNA degradation. Catalyzes the phosphorolysis of single-stranded polyribonucleotides processively in the 3'- to 5'-direction. This Agrobacterium fabrum (strain C58 / ATCC 33970) (Agrobacterium tumefaciens (strain C58)) protein is Polyribonucleotide nucleotidyltransferase.